Here is a 359-residue protein sequence, read N- to C-terminus: Glycerol-3-phosphate dehydrogenase [NAD(P)+] (359 aa).

Thr11, Trp12, Arg32, and Lys107 together coordinate NADPH. Sn-glycerol 3-phosphate-binding residues include Lys107 and Gly138. Ala142 contributes to the NADPH binding site. Residues Lys193, Asp246, Ser256, Arg257, and Asn258 each contribute to the sn-glycerol 3-phosphate site. Catalysis depends on Lys193, which acts as the Proton acceptor. Arg257 serves as a coordination point for NADPH. NADPH is bound by residues Val281 and Glu283.

The protein belongs to the NAD-dependent glycerol-3-phosphate dehydrogenase family.

It localises to the cytoplasm. The enzyme catalyses sn-glycerol 3-phosphate + NAD(+) = dihydroxyacetone phosphate + NADH + H(+). It carries out the reaction sn-glycerol 3-phosphate + NADP(+) = dihydroxyacetone phosphate + NADPH + H(+). It participates in membrane lipid metabolism; glycerophospholipid metabolism. Its function is as follows. Catalyzes the reduction of the glycolytic intermediate dihydroxyacetone phosphate (DHAP) to sn-glycerol 3-phosphate (G3P), the key precursor for phospholipid synthesis. The sequence is that of Glycerol-3-phosphate dehydrogenase [NAD(P)+] from Dehalococcoides mccartyi (strain ATCC BAA-2100 / JCM 16839 / KCTC 5957 / BAV1).